A 62-amino-acid polypeptide reads, in one-letter code: UPF0291 protein CLB_2550 (62 aa).

This sequence belongs to the UPF0291 family.

The protein resides in the cytoplasm. In Clostridium botulinum (strain ATCC 19397 / Type A), this protein is UPF0291 protein CLB_2550.